We begin with the raw amino-acid sequence, 236 residues long: Phosphoribosylaminoimidazole-succinocarboxamide synthase (236 aa).

The protein belongs to the SAICAR synthetase family.

The enzyme catalyses 5-amino-1-(5-phospho-D-ribosyl)imidazole-4-carboxylate + L-aspartate + ATP = (2S)-2-[5-amino-1-(5-phospho-beta-D-ribosyl)imidazole-4-carboxamido]succinate + ADP + phosphate + 2 H(+). It participates in purine metabolism; IMP biosynthesis via de novo pathway; 5-amino-1-(5-phospho-D-ribosyl)imidazole-4-carboxamide from 5-amino-1-(5-phospho-D-ribosyl)imidazole-4-carboxylate: step 1/2. This Rickettsia felis (strain ATCC VR-1525 / URRWXCal2) (Rickettsia azadi) protein is Phosphoribosylaminoimidazole-succinocarboxamide synthase.